A 120-amino-acid polypeptide reads, in one-letter code: Glycine cleavage system H protein (120 aa).

Positions 17 to 99 constitute a Lipoyl-binding domain; sequence VATVGITTYA…QGAGWFFKLK (83 aa). Lysine 58 bears the N6-lipoyllysine mark.

It belongs to the GcvH family. As to quaternary structure, the glycine cleavage system is composed of four proteins: P, T, L and H. It depends on (R)-lipoate as a cofactor.

Functionally, the glycine cleavage system catalyzes the degradation of glycine. The H protein shuttles the methylamine group of glycine from the P protein to the T protein. The polypeptide is Glycine cleavage system H protein (Rhizobium etli (strain CIAT 652)).